Here is a 114-residue protein sequence, read N- to C-terminus: Protein lin-52 homolog (114 aa).

Phosphoserine occurs at positions 26 and 51.

Belongs to the lin-52 family. In terms of assembly, component of the DREAM complex (also named LINC complex) at least composed of E2F4, E2F5, LIN9, LIN37, LIN52, LIN54, MYBL1, MYBL2, RBL1, RBL2, RBBP4, TFDP1 and TFDP2. The complex exists in quiescent cells where it represses cell cycle-dependent genes. It dissociates in S phase when LIN9, LIN37, LIN52 and LIN54 form a subcomplex that binds to MYBL2.

In Pongo abelii (Sumatran orangutan), this protein is Protein lin-52 homolog (LIN52).